Reading from the N-terminus, the 410-residue chain is Venom metalloproteinase 2 (410 aa).

An N-terminal signal peptide occupies residues 1–22 (MDTFILTYSILFLALFIESIHS). N-linked (GlcNAc...) asparagine glycosylation is found at Asn64, Asn112, Asn187, Asn231, Asn292, and Asn307. Residues 214–410 (FYPKLLVLVD…NNNVSKFIWS (197 aa)) enclose the Peptidase M12B domain. His365 is a binding site for Zn(2+). The active site involves Glu366. Residues His369 and His375 each contribute to the Zn(2+) site. N-linked (GlcNAc...) asparagine glycosylation is present at Asn403.

This sequence in the C-terminal section; belongs to the venom metalloproteinase (M12B) family. In terms of assembly, monomer. It depends on Zn(2+) as a cofactor. As to expression, expressed by the venom gland.

It is found in the secreted. The gelatinase activity is inhibited by EDTA. The recombinant protein has gelatinase activity. In vivo, injection of this recombinant into fifth instar L.oleracea (host) larvae results in partial insect mortality associated with the molt to sixth instar, with surviving insects showing retarded development and growth. This chain is Venom metalloproteinase 2, found in Eulophus pennicornis (Parasitoid wasp).